An 878-amino-acid polypeptide reads, in one-letter code: Aminopeptidase M1-C (878 aa).

Positions 102–209 (LGEGVLAMDF…MSTYLVAIVV (108 aa)) are required for membrane association. Substrate is bound by residues Glu-142 and 275-279 (GAMEN). His-311 lines the Zn(2+) pocket. Glu-312 (proton acceptor) is an active-site residue. Zn(2+)-binding residues include His-315 and Glu-334. The Dileucine internalization motif signature appears at 726–727 (LL).

The protein belongs to the peptidase M1 family. Homodimer. Requires Zn(2+) as cofactor.

Its subcellular location is the membrane. The protein localises to the microsome membrane. The protein resides in the cytoplasm. It catalyses the reaction Release of an N-terminal amino acid, Xaa-|-Yaa- from a peptide, amide or arylamide. Xaa is preferably Ala, but may be most amino acids including Pro (slow action). When a terminal hydrophobic residue is followed by a prolyl residue, the two may be released as an intact Xaa-Pro dipeptide.. The protein is Aminopeptidase M1-C of Oryza sativa subsp. japonica (Rice).